Here is a 141-residue protein sequence, read N- to C-terminus: Nucleoside diphosphate kinase 1 (141 aa).

6 residues coordinate ATP: K11, F59, R87, T93, R104, and N114. H117 (pros-phosphohistidine intermediate) is an active-site residue.

Belongs to the NDK family. Homotetramer. It depends on Mg(2+) as a cofactor.

The protein resides in the cytoplasm. It catalyses the reaction a 2'-deoxyribonucleoside 5'-diphosphate + ATP = a 2'-deoxyribonucleoside 5'-triphosphate + ADP. The catalysed reaction is a ribonucleoside 5'-diphosphate + ATP = a ribonucleoside 5'-triphosphate + ADP. Major role in the synthesis of nucleoside triphosphates other than ATP. The ATP gamma phosphate is transferred to the NDP beta phosphate via a ping-pong mechanism, using a phosphorylated active-site intermediate. This chain is Nucleoside diphosphate kinase 1, found in Protochlamydia amoebophila (strain UWE25).